The chain runs to 56 residues: Large ribosomal subunit protein bL33 (56 aa).

The segment covering 1–12 (MATKGGREKIKL) has biased composition (basic and acidic residues). Residues 1–28 (MATKGGREKIKLESTAGTGHFYTTSKNK) form a disordered region. The span at 15 to 25 (TAGTGHFYTTS) shows a compositional bias: polar residues.

The protein belongs to the bacterial ribosomal protein bL33 family.

The protein is Large ribosomal subunit protein bL33 of Albidiferax ferrireducens (strain ATCC BAA-621 / DSM 15236 / T118) (Rhodoferax ferrireducens).